Here is an 866-residue protein sequence, read N- to C-terminus: Dynamin-2 (866 aa).

The 267-residue stretch at 28-294 (HLDLPQIAVV…LTNHIRESLP (267 aa)) folds into the Dynamin-type G domain. The interval 38 to 45 (GGQSAGKS) is G1 motif. 7 residues coordinate GDP: Ser41, Gly43, Lys44, Ser45, Ser46, Arg59, and Gly60. Residues 64–66 (VTR) are G2 motif. Residues 136-139 (DLPG) are G3 motif. The interval 205 to 208 (TKLD) is G4 motif. The GDP site is built by Lys206, Asp208, and Asp211. Residue Tyr231 is modified to Phosphotyrosine. A G5 motif region spans residues 235-238 (VNRS). Residues Asn236, Arg237, and Gln239 each contribute to the GDP site. Lys299 carries the post-translational modification N6-acetyllysine. In terms of domain architecture, PH spans 515-621 (QVIRRGWLTI…WKASFLRAGV (107 aa)). Position 593 is a phosphotyrosine (Tyr593). Lys594 carries the N6-acetyllysine modification. Positions 649–740 (VETIRNLVDS…IIGDISTSTV (92 aa)) constitute a GED domain. Residues 737 to 866 (TSTVSTPVPP…IRPAEPSLLD (130 aa)) are disordered. At Thr751 the chain carries Phosphothreonine. The span at 752-763 (WIQNTSSHSPTP) shows a compositional bias: polar residues. Position 760 is a phosphoserine; by CDK1 (Ser760). Pro residues-rich tracts occupy residues 784–794 (TPGPPLIPVPV), 802–811 (PPIPSRPGPH), and 822–851 (SAPP…PAAP).

Belongs to the TRAFAC class dynamin-like GTPase superfamily. Dynamin/Fzo/YdjA family. In terms of assembly, oligomerizes into a helical polymer that self-assembles around the vesicle membrane, when associated to the menbrane through lipid binding. Interacts with SHANK1 and SHANK2. Interacts with SNX9. Interacts (via C-terminal proline-rich domain (PRD)) with SNX18 (via SH3 domain); this interaction regulates ATG9A and ATG16L1 trafficking from recycling endosomes to sites of autophagosome formation. Interacts with SNX33 (via SH3 domain). Interacts with MYO1E (via SH3 domain). Interacts with PSTPIP1 (via SH3 domain). Interacts with CTNND2. Interacts (via C-terminal proline-rich domain (PRD)) with BIN1 (via SH3 domain); this interaction allows the recruitment of DNM2 to the membrane tubules and inhibits self-assembly-stimulated GTPase activity on the membrane. Interacts with GABARAP, GABARAPL1 and GABARAPL2. Interacts with MAP1LC3B (the lipidate and non-lipidated LC3 form); this interaction mediates recycling endosome scission leading to autophagosome release. Interacts with ITSN1. Interacts with MYOF. Interacts (via C-terminal proline-rich domain (PRD)) with SH3BP4 (via SH3 domain); this interaction controls the GTPase activity and is prevented by EGFR-induced tyrosine phosphorylation of either DNM2 or SH3BP4. May interact with PIK3C3. May be a component of a complex composed of RAB5A (in GDP-bound form), DYN2 and PIK3C3. Interacts with SDC4; this interaction is markedly enhanced at focal ahesion site upon induction of focal adhesions and stress-fiber formation. Interacts with ACTN1. Interacts with CTTN; this interaction stimulates the intrinsic GTPase activity of DNM2 and stabilizes the association of DNM2 and actin filaments; in addition this interaction is stimulated by ligand binding to the receptor, leading to the recruitment of the DNM2-CTTN complex to the sequestered receptor-ligand complex to its internalization. Interacts with NOSTRIN (via SH3 domain); this interaction allows the recruitment of NOS3 to dynamin-positive structures. Interacts with TUBG1; this interaction may participate in centrosome cohesion. In terms of processing, phosphorylation at Ser-844 by GSK3-alpha relieves the inhibition of BIN1 and promotes endocytosis. Phosphorylation at Ser-760 by CDK1 is greatly increased upon mitotic entry. It regulates cytokinesis downstream of calcineurin, and does not affect clathrin-mediated endocytosis. Dephosphorylated by calcineurin/PP2 during cytokinesis in a Ca(2+)- and calmodulin-dependent manner. Phosphorylated on tyrosine residues by EGFR and after activation of SRC.

It localises to the cytoplasm. The protein resides in the cytoskeleton. The protein localises to the cytoplasmic vesicle. It is found in the clathrin-coated vesicle. Its subcellular location is the cell projection. It localises to the uropodium. The protein resides in the endosome. The protein localises to the microtubule organizing center. It is found in the centrosome. Its subcellular location is the centriole. It localises to the recycling endosome. The protein resides in the phagocytic cup. The protein localises to the phagosome membrane. It is found in the podosome. Its subcellular location is the cell junction. It localises to the postsynaptic density. The protein resides in the synapse. The protein localises to the synaptosome. It is found in the midbody. Its subcellular location is the membrane. It localises to the clathrin-coated pit. It catalyses the reaction GTP + H2O = GDP + phosphate + H(+). In terms of biological role, catalyzes the hydrolysis of GTP and utilizes this energy to mediate vesicle scission at plasma membrane during endocytosis and filament remodeling at many actin structures during organization of the actin cytoskeleton. Plays an important role in vesicular trafficking processes, namely clathrin-mediated endocytosis (CME), exocytic and clathrin-coated vesicle from the trans-Golgi network, and PDGF stimulated macropinocytosis. During vesicular trafficking process, associates to the membrane, through lipid binding, and self-assembles into ring-like structure through oligomerization to form a helical polymer around the vesicle membrane and leading to vesicle scission. Plays a role in organization of the actin cytoskeleton by mediating arrangement of stress fibers and actin bundles in podocytes. During organization of the actin cytoskeleton, self-assembles into ring-like structure that directly bundles actin filaments to form typical membrane tubules decorated with dynamin spiral polymers. Self-assembly increases GTPase activity and the GTP hydrolysis causes the rapid depolymerization of dynamin spiral polymers, and results in dispersion of actin bundles. Remodels, through its interaction with CTTN, bundled actin filaments in a GTPase-dependent manner and plays a role in orchestrating the global actomyosin cytoskeleton. The interaction with CTTN stabilizes the interaction of DNM2 and actin filaments and stimulates the intrinsic GTPase activity that results in actin filament-barbed ends and increases the sensitivity of filaments in bundles to the actin depolymerizing factor, CFL1. Plays a role in the autophagy process, by participating in the formation of ATG9A vesicles destined for the autophagosomes through its interaction with SNX18, by mediating recycling endosome scission leading to autophagosome release through MAP1LC3B interaction. Also regulates maturation of apoptotic cell corpse-containing phagosomes by recruiting PIK3C3 to the phagosome membrane. Also plays a role in cytokinesis. May participate in centrosome cohesion through its interaction with TUBG1. Plays a role in the regulation of neuron morphology, axon growth and formation of neuronal growth cones. Involved in membrane tubulation. The polypeptide is Dynamin-2 (Bos taurus (Bovine)).